The chain runs to 230 residues: Small ribosomal subunit protein uS3 (230 aa).

In terms of domain architecture, KH type-2 spans 39 to 107 (VRNYLRQKLA…PIHVNIEEIR (69 aa)). The tract at residues 210 to 230 (SSKPEHESKQRKAGRRNAAAN) is disordered.

Belongs to the universal ribosomal protein uS3 family. Part of the 30S ribosomal subunit. Forms a tight complex with proteins S10 and S14.

Its function is as follows. Binds the lower part of the 30S subunit head. Binds mRNA in the 70S ribosome, positioning it for translation. The sequence is that of Small ribosomal subunit protein uS3 from Neisseria gonorrhoeae (strain ATCC 700825 / FA 1090).